Reading from the N-terminus, the 74-residue chain is DNA gyrase inhibitor YacG (74 aa).

Positions 7, 10, 26, and 30 each coordinate Zn(2+).

The protein belongs to the DNA gyrase inhibitor YacG family. In terms of assembly, interacts with GyrB. Requires Zn(2+) as cofactor.

Inhibits all the catalytic activities of DNA gyrase by preventing its interaction with DNA. Acts by binding directly to the C-terminal domain of GyrB, which probably disrupts DNA binding by the gyrase. The sequence is that of DNA gyrase inhibitor YacG from Shewanella denitrificans (strain OS217 / ATCC BAA-1090 / DSM 15013).